We begin with the raw amino-acid sequence, 218 residues long: GTP cyclohydrolase 1 (218 aa).

Residues Cys-109, His-112, and Cys-180 each contribute to the Zn(2+) site.

The protein belongs to the GTP cyclohydrolase I family. Toroid-shaped homodecamer, composed of two pentamers of five dimers.

It carries out the reaction GTP + H2O = 7,8-dihydroneopterin 3'-triphosphate + formate + H(+). Its pathway is cofactor biosynthesis; 7,8-dihydroneopterin triphosphate biosynthesis; 7,8-dihydroneopterin triphosphate from GTP: step 1/1. This is GTP cyclohydrolase 1 from Haemophilus influenzae (strain 86-028NP).